Consider the following 252-residue polypeptide: SPNSESILQFGDPGTARDFLERESYVISYNRRDRVASWTGEHLTADSLKTGDGVDRDHSKFKEDPDVPSLFRSTLADYSGSGFDRGHMAPAGDAVATQPAMDQTFYLSNMSPQVGIGFNRHYWAYLEGFCRSLTKKFSDVYVFTGPLFLPTKGSDGKYTVTYNVLQGNVAVPTHFYKVILVPQGDNKYAYGAFILPNQAIDTKTPLTNFKVKLTDVEKASGLTFFDKLDVSTLGDLCAATTCAVSSSGGGDA.

H87 (proton acceptor) is an active-site residue. N119 lines the Mg(2+) pocket.

Belongs to the DNA/RNA non-specific endonuclease family. Mg(2+) is required as a cofactor. It depends on Mn(2+) as a cofactor.

The protein localises to the secreted. Functionally, this enzyme has both RNase and DNase activity. In Cunninghamella echinulata var. echinulata, this protein is Nuclease C1 (NUC1CE).